Here is a 67-residue protein sequence, read N- to C-terminus: Probable Sec-independent protein translocase protein TatE (67 aa).

Residues 4-21 form a helical membrane-spanning segment; it reads ISITKLLVIAALVVLLFG. Positions 44–67 are disordered; that stretch reads NDDDTGAKTPAASEAPAERLSHKE.

It belongs to the TatA/E family. TatE subfamily.

The protein resides in the cell inner membrane. Functionally, part of the twin-arginine translocation (Tat) system that transports large folded proteins containing a characteristic twin-arginine motif in their signal peptide across membranes. TatE shares overlapping functions with TatA. This is Probable Sec-independent protein translocase protein TatE from Cronobacter sakazakii (strain ATCC BAA-894) (Enterobacter sakazakii).